We begin with the raw amino-acid sequence, 774 residues long: Pentatricopeptide repeat-containing protein At4g20770 (774 aa).

PPR repeat units follow at residues 5–39 (GNKYLASLLRCYRDERCKLSGKVIHGFIVRMGMKS), 40–70 (DTYLCNRLLDLYIECGDGDYARKVFDEMSVR), 71–101 (DVYSWNAFLTFRCKVGDLGEACEVFDGMPER), 102–136 (DVVSWNNMISVLVRKGFEEKALVVYKRMVCDGFLP), 137–171 (SRFTLASVLSACSKVLDGVFGMRCHGVAVKTGLDK), 172–203 (NIFVGNALLSMYAKCGFIVDYGVRVFESLSQP), 204–238 (NEVSYTAVIGGLARENKVLEAVQMFRLMCEKGVQV), 239–270 (DSVCLSNILSISAPREGCDSLSEIYGNELGKQ), 283–313 (DLHLNNSLLEIYAKNKDMNGAELIFAEMPEV), 314–348 (NVVSWNIMIVGFGQEYRSDKSVEFLTRMRDSGFQP), 349–379 (NEVTCISVLGACFRSGDVETGRRIFSSIPQP), 380–414 (SVSAWNAMLSGYSNYEHYEEAISNFRQMQFQNLKP), 415–449 (DKTTLSVILSSCARLRFLEGGKQIHGVVIRTEISK), 450–480 (NSHIVSGLIAVYSECEKMEISECIFDDCINE), 482–516 (DIACWNSMISGFRHNMLDTKALILFRRMHQTAVLC), 518–552 (NETSFATVLSSCSRLCSLLHGRQFHGLVVKSGYVS), 553–583 (DSFVETALTDMYCKCGEIDSARQFFDAVLRK), 584–618 (NTVIWNEMIHGYGHNGRGDEAVGLYRKMISSGEKP), 619–654 (DGITFVSVLTACSHSGLVETGLEILSSMQRIHGIEP), and 655–685 (ELDHYICIVDCLGRAGRLEDAEKLAEATPYK). Residues 690–765 (LWEILLSSCR…TPGQSWTTYG (76 aa)) form a type E motif region.

The protein belongs to the PPR family. PCMP-E subfamily.

The sequence is that of Pentatricopeptide repeat-containing protein At4g20770 (PCMP-E35) from Arabidopsis thaliana (Mouse-ear cress).